Here is a 537-residue protein sequence, read N- to C-terminus: Glutamyl-tRNA reductase, chloroplastic (537 aa).

Residues 1-48 (MMASTTSATAAGGAFAAAKTRAGSSAAGGGACARVAAGGRRRSGVVVR) constitute a chloroplast transit peptide. Residues 134–137 (TCNR), Ser-194, 199–201 (EGQ), and Gln-205 contribute to the substrate site. Cys-135 functions as the Nucleophile in the catalytic mechanism. 276-281 (GAGKMG) lines the NADP(+) pocket.

Belongs to the glutamyl-tRNA reductase family.

It localises to the plastid. The protein resides in the chloroplast. It carries out the reaction (S)-4-amino-5-oxopentanoate + tRNA(Glu) + NADP(+) = L-glutamyl-tRNA(Glu) + NADPH + H(+). It functions in the pathway porphyrin-containing compound metabolism; protoporphyrin-IX biosynthesis; 5-aminolevulinate from L-glutamyl-tRNA(Glu): step 1/2. In terms of biological role, catalyzes the NADPH-dependent reduction of glutamyl-tRNA(Glu) to glutamate 1-semialdehyde (GSA). This is Glutamyl-tRNA reductase, chloroplastic from Oryza sativa subsp. indica (Rice).